A 147-amino-acid polypeptide reads, in one-letter code: Cytochrome c-type biogenesis protein CcmE (147 aa).

The Cytoplasmic segment spans residues M1–R9. The helical; Signal-anchor for type II membrane protein transmembrane segment at I10 to A30 threads the bilayer. Residues M31 to G147 lie on the Periplasmic side of the membrane. Positions 123 and 127 each coordinate heme.

The protein belongs to the CcmE/CycJ family.

It localises to the cell inner membrane. Its function is as follows. Heme chaperone required for the biogenesis of c-type cytochromes. Transiently binds heme delivered by CcmC and transfers the heme to apo-cytochromes in a process facilitated by CcmF and CcmH. The polypeptide is Cytochrome c-type biogenesis protein CcmE (Roseobacter denitrificans (strain ATCC 33942 / OCh 114) (Erythrobacter sp. (strain OCh 114))).